We begin with the raw amino-acid sequence, 183 residues long: Ribonuclease H (183 aa).

The RNase H type-1 domain occupies 2–151 (SQARFIAFSD…VDQLAQAAAR (150 aa)). Residues Asp11, Glu57, Asp79, and Asp143 each contribute to the Mg(2+) site.

Belongs to the RNase H family. As to quaternary structure, monomer. Mg(2+) is required as a cofactor.

It localises to the cytoplasm. The enzyme catalyses Endonucleolytic cleavage to 5'-phosphomonoester.. In terms of biological role, endonuclease that specifically degrades the RNA of RNA-DNA hybrids. The chain is Ribonuclease H from Anaeromyxobacter sp. (strain K).